We begin with the raw amino-acid sequence, 643 residues long: Probable extracellular metalloproteinase 4 (643 aa).

Positions Met1–Ala18 are cleaved as a signal peptide. The propeptide occupies His19–Ala254. The span at Thr47–Gly57 shows a compositional bias: basic and acidic residues. Positions Thr47–Asn69 are disordered. The segment covering Glu58 to Asn69 has biased composition (polar residues). N-linked (GlcNAc...) asparagine glycosylation is found at Asn271 and Asn420. His437 lines the Zn(2+) pocket. Residue Glu438 is part of the active site. His441 contacts Zn(2+). N-linked (GlcNAc...) asparagine glycosylation is found at Asn603 and Asn629.

The protein belongs to the peptidase M36 family. The cofactor is Zn(2+).

It is found in the secreted. Functionally, secreted metalloproteinase probably acting as a virulence factor. The chain is Probable extracellular metalloproteinase 4 (MEP4) from Arthroderma benhamiae (strain ATCC MYA-4681 / CBS 112371) (Trichophyton mentagrophytes).